Consider the following 375-residue polypeptide: tRNA-specific 2-thiouridylase MnmA (375 aa).

ATP-binding positions include 7–14 and M33; that span reads GLSGGVDS. Residues 102-104 are interaction with target base in tRNA; the sequence is NPD. The active-site Nucleophile is C107. C107 and C205 are disulfide-bonded. An ATP-binding site is contributed by G132. The interval 155–157 is interaction with tRNA; sequence KDQ. C205 acts as the Cysteine persulfide intermediate in catalysis. The interval 313–314 is interaction with tRNA; the sequence is RY.

The protein belongs to the MnmA/TRMU family.

It localises to the cytoplasm. The catalysed reaction is S-sulfanyl-L-cysteinyl-[protein] + uridine(34) in tRNA + AH2 + ATP = 2-thiouridine(34) in tRNA + L-cysteinyl-[protein] + A + AMP + diphosphate + H(+). Its function is as follows. Catalyzes the 2-thiolation of uridine at the wobble position (U34) of tRNA, leading to the formation of s(2)U34. In Phytoplasma australiense, this protein is tRNA-specific 2-thiouridylase MnmA.